The sequence spans 465 residues: tRNA modification GTPase MnmE (465 aa).

R21, E85, and K124 together coordinate (6S)-5-formyl-5,6,7,8-tetrahydrofolate. The TrmE-type G domain occupies G220–H387. A K(+)-binding site is contributed by N230. Residues N230–T235, S249–T255, D274–G277, and N337–D340 contribute to the GTP site. S234 is a binding site for Mg(2+). 3 residues coordinate K(+): S249, I251, and T254. T255 is a Mg(2+) binding site. K465 serves as a coordination point for (6S)-5-formyl-5,6,7,8-tetrahydrofolate.

This sequence belongs to the TRAFAC class TrmE-Era-EngA-EngB-Septin-like GTPase superfamily. TrmE GTPase family. As to quaternary structure, homodimer. Heterotetramer of two MnmE and two MnmG subunits. K(+) serves as cofactor.

It localises to the cytoplasm. Exhibits a very high intrinsic GTPase hydrolysis rate. Involved in the addition of a carboxymethylaminomethyl (cmnm) group at the wobble position (U34) of certain tRNAs, forming tRNA-cmnm(5)s(2)U34. In Bacteroides thetaiotaomicron (strain ATCC 29148 / DSM 2079 / JCM 5827 / CCUG 10774 / NCTC 10582 / VPI-5482 / E50), this protein is tRNA modification GTPase MnmE.